The sequence spans 400 residues: Nicotinate phosphoribosyltransferase (400 aa).

H220 is subject to Phosphohistidine; by autocatalysis.

This sequence belongs to the NAPRTase family. In terms of processing, transiently phosphorylated on a His residue during the reaction cycle. Phosphorylation strongly increases the affinity for substrates and increases the rate of nicotinate D-ribonucleotide production. Dephosphorylation regenerates the low-affinity form of the enzyme, leading to product release.

The catalysed reaction is nicotinate + 5-phospho-alpha-D-ribose 1-diphosphate + ATP + H2O = nicotinate beta-D-ribonucleotide + ADP + phosphate + diphosphate. The protein operates within cofactor biosynthesis; NAD(+) biosynthesis; nicotinate D-ribonucleotide from nicotinate: step 1/1. In terms of biological role, catalyzes the synthesis of beta-nicotinate D-ribonucleotide from nicotinate and 5-phospho-D-ribose 1-phosphate at the expense of ATP. The sequence is that of Nicotinate phosphoribosyltransferase from Shigella boydii serotype 18 (strain CDC 3083-94 / BS512).